The following is a 192-amino-acid chain: Ribosomal RNA small subunit methyltransferase G (192 aa).

S-adenosyl-L-methionine contacts are provided by residues Gly-63, Leu-68, 112–113, and Arg-125; that span reads IE.

The protein belongs to the methyltransferase superfamily. RNA methyltransferase RsmG family.

The protein localises to the cytoplasm. It carries out the reaction guanosine(527) in 16S rRNA + S-adenosyl-L-methionine = N(7)-methylguanosine(527) in 16S rRNA + S-adenosyl-L-homocysteine. Functionally, specifically methylates the N7 position of guanine in position 527 of 16S rRNA. This Rickettsia rickettsii (strain Iowa) protein is Ribosomal RNA small subunit methyltransferase G.